The sequence spans 349 residues: Holliday junction branch migration complex subunit RuvB (349 aa).

A large ATPase domain (RuvB-L) region spans residues 1 to 181 (MDDRILTSVN…FGVLCPMEFY (181 aa)). ATP contacts are provided by residues L20, R21, G62, K65, T66, T67, 128–130 (EDY), R171, Y181, and R218. Position 66 (T66) interacts with Mg(2+). Positions 182–252 (NDEELKEIIV…SAKKALNLLE (71 aa)) are small ATPAse domain (RuvB-S). The tract at residues 255–349 (DEGFDSIDNK…DQCSFFKKEK (95 aa)) is head domain (RuvB-H). DNA is bound by residues R310 and R315.

It belongs to the RuvB family. Homohexamer. Forms an RuvA(8)-RuvB(12)-Holliday junction (HJ) complex. HJ DNA is sandwiched between 2 RuvA tetramers; dsDNA enters through RuvA and exits via RuvB. An RuvB hexamer assembles on each DNA strand where it exits the tetramer. Each RuvB hexamer is contacted by two RuvA subunits (via domain III) on 2 adjacent RuvB subunits; this complex drives branch migration. In the full resolvosome a probable DNA-RuvA(4)-RuvB(12)-RuvC(2) complex forms which resolves the HJ.

It localises to the cytoplasm. The catalysed reaction is ATP + H2O = ADP + phosphate + H(+). The RuvA-RuvB-RuvC complex processes Holliday junction (HJ) DNA during genetic recombination and DNA repair, while the RuvA-RuvB complex plays an important role in the rescue of blocked DNA replication forks via replication fork reversal (RFR). RuvA specifically binds to HJ cruciform DNA, conferring on it an open structure. The RuvB hexamer acts as an ATP-dependent pump, pulling dsDNA into and through the RuvAB complex. RuvB forms 2 homohexamers on either side of HJ DNA bound by 1 or 2 RuvA tetramers; 4 subunits per hexamer contact DNA at a time. Coordinated motions by a converter formed by DNA-disengaged RuvB subunits stimulates ATP hydrolysis and nucleotide exchange. Immobilization of the converter enables RuvB to convert the ATP-contained energy into a lever motion, pulling 2 nucleotides of DNA out of the RuvA tetramer per ATP hydrolyzed, thus driving DNA branch migration. The RuvB motors rotate together with the DNA substrate, which together with the progressing nucleotide cycle form the mechanistic basis for DNA recombination by continuous HJ branch migration. Branch migration allows RuvC to scan DNA until it finds its consensus sequence, where it cleaves and resolves cruciform DNA. In Clostridium acetobutylicum (strain ATCC 824 / DSM 792 / JCM 1419 / IAM 19013 / LMG 5710 / NBRC 13948 / NRRL B-527 / VKM B-1787 / 2291 / W), this protein is Holliday junction branch migration complex subunit RuvB.